Consider the following 349-residue polypeptide: tRNA pseudouridine synthase D (349 aa).

Phe27 contacts substrate. The active-site Nucleophile is Asp80. Position 129 (Asn129) interacts with substrate. The TRUD domain occupies 155 to 303; sequence GVPNYFGAQR…VEAARRAMLL (149 aa). Phe329 lines the substrate pocket.

The protein belongs to the pseudouridine synthase TruD family.

The enzyme catalyses uridine(13) in tRNA = pseudouridine(13) in tRNA. Functionally, responsible for synthesis of pseudouridine from uracil-13 in transfer RNAs. This chain is tRNA pseudouridine synthase D, found in Klebsiella pneumoniae subsp. pneumoniae (strain ATCC 700721 / MGH 78578).